The chain runs to 68 residues: U-poneritoxin(01)-Om4a (68 aa).

The N-terminal stretch at 1–25 is a signal peptide; sequence MKPSSLTLAFLVVFMMAIMYNSVQA. Residues 26–39 constitute a propeptide that is removed on maturation; that stretch reads EALADADAEAFAEA.

This sequence belongs to the formicidae venom precursor-01 superfamily. As to quaternary structure, homo- or heterodimer with PLP7 (AC A0A348G6I9); disulfide-linked. In terms of processing, truncated sequences of this peptide have also been found in the venom. It is possible they have been cleaved in the venom. As to expression, expressed by the venom gland.

The protein localises to the secreted. Functionally, this homodimer composed of two cationic amphipathic alpha-helical peptides has antimicrobial activities against E.coli (MIC=3.1 uM), S.aureus (MIC=3.1 uM), and S.cerevisiae (MIC=3.1 uM). It also shows histamine-releasing activity (66.4% at 10 uM) and a weak hemolytic activity (10.5% at 50 uM). The chain is U-poneritoxin(01)-Om4a from Odontomachus monticola (Trap-jaw ant).